Consider the following 387-residue polypeptide: Dynactin subunit 2 (387 aa).

3 coiled-coil regions span residues 99-125 (LQRCHRLKCEMNELMEEIEASRADTGR), 256-282 (SQLDTIEQRLNNLLQQMNSIQEKSNAT), and 355-387 (TGVQEAFAQNLENVNKEVKKLEERMTKLQQMIK).

It belongs to the dynactin subunit 2 family. In terms of assembly, subunit of dynactin, a multiprotein complex associated with dynein.

It is found in the cytoplasm. It localises to the cytoskeleton. The protein resides in the membrane. Functionally, modulates cytoplasmic dynein binding to an organelle, and plays a role in prometaphase chromosome alignment and spindle organization during mitosis. The protein is Dynactin subunit 2 of Anopheles gambiae (African malaria mosquito).